The chain runs to 263 residues: Killer cell lectin-like receptor 4 (263 aa).

The Cytoplasmic portion of the chain corresponds to 1-44; the sequence is MTEQEDTFSAVRFHKSSGLQNEMRLKETRKPEKARLRVCSVPWQ. Residues 45–65 traverse the membrane as a helical; Signal-anchor for type II membrane protein segment; it reads LIVIALGILISLRLVTVAVLM. Residues 66 to 263 lie on the Extracellular side of the membrane; the sequence is TNIFQYGQQK…CGKRLDKFPH (198 aa). Residues Asn-87 and Asn-104 are each glycosylated (N-linked (GlcNAc...) asparagine). Residues 139-258 enclose the C-type lectin domain; sequence GVKVYWFCYG…SFICICGKRL (120 aa). 4 cysteine pairs are disulfide-bonded: Cys-146-Cys-151, Cys-164-Cys-252, Cys-168-Cys-254, and Cys-233-Cys-246. Residues Asn-170 and Asn-222 are each glycosylated (N-linked (GlcNAc...) asparagine).

As to quaternary structure, homodimer; disulfide-linked. Interacts with the adapter protein TYROBP/DAP12; the interaction leads to natural killer cell activation.

The protein localises to the cell membrane. In terms of biological role, receptor on natural killer (NK) cells for class I MHC. The polypeptide is Killer cell lectin-like receptor 4 (Klra4) (Mus musculus (Mouse)).